We begin with the raw amino-acid sequence, 159 residues long: Protransforming growth factor alpha (159 aa).

The N-terminal stretch at 1–23 (MVPAAGQLALLALGILVAVCQAL) is a signal peptide. Residues 24 to 38 (ENSTSPLSDSPVAAA) constitute a propeptide, removed in mature form. Topologically, residues 24-97 (ENSTSPLSDS…AVVAASQKKQ (74 aa)) are extracellular. Asn25 carries N-linked (GlcNAc...) asparagine glycosylation. The EGF-like domain maps to 42–82 (HFNKCPDSHTQYCFHGTCRFLVQEEKPACVCHSGYVGVRCE). 3 disulfides stabilise this stretch: Cys46-Cys59, Cys54-Cys70, and Cys72-Cys81. The propeptide at 89–159 (VVAASQKKQA…TACCHSETVV (71 aa)) is removed in mature form. Residues 98–123 (AITALVVVSIVALAVLIITCVLIHCC) form a helical membrane-spanning segment. Residues 124-159 (QVRKHCEWCRALVCRHEKPSALLKGRTACCHSETVV) lie on the Cytoplasmic side of the membrane. Residues Cys152 and Cys153 are each lipidated (S-palmitoyl cysteine).

Interacts with the PDZ domains of MAGI3, SDCBP and SNTA1. The interaction with SDCBP, is required for the targeting to the cell surface. In the endoplasmic reticulum, in its immature form (i.e. with a prosegment and lacking full N-glycosylation), interacts with CNIH. In the Golgi apparatus, may form a complex with CNIH and GORASP2. Interacts (via cytoplasmic C-terminal domain) with NKD2.

Its subcellular location is the secreted. The protein localises to the extracellular space. The protein resides in the cell membrane. TGF alpha is a mitogenic polypeptide that is able to bind to the EGF receptor/EGFR and to act synergistically with TGF beta to promote anchorage-independent cell proliferation in soft agar. The protein is Protransforming growth factor alpha (Tgfa) of Rattus norvegicus (Rat).